The chain runs to 192 residues: Casparian strip membrane protein 4 (192 aa).

Topologically, residues methionine 1 to alanine 29 are cytoplasmic. The chain crosses the membrane as a helical span at residues valine 30–isoleucine 50. Residues serine 51–threonine 79 lie on the Extracellular side of the membrane. A glycan (N-linked (GlcNAc...) asparagine) is linked at asparagine 56. The helical transmembrane segment at phenylalanine 80 to isoleucine 100 threads the bilayer. The Cytoplasmic segment spans residues valine 101–arginine 112. Residues leucine 113–alanine 133 traverse the membrane as a helical segment. Residues alanine 134–serine 166 lie on the Extracellular side of the membrane. Residues leucine 167–alanine 187 traverse the membrane as a helical segment. At leucine 188–histidine 192 the chain is on the cytoplasmic side.

This sequence belongs to the Casparian strip membrane proteins (CASP) family. In terms of assembly, homodimer and heterodimers.

The protein localises to the cell membrane. Regulates membrane-cell wall junctions and localized cell wall deposition. Required for establishment of the Casparian strip membrane domain (CSD) and the subsequent formation of Casparian strips, a cell wall modification of the root endodermis that determines an apoplastic barrier between the intraorganismal apoplasm and the extraorganismal apoplasm and prevents lateral diffusion. The polypeptide is Casparian strip membrane protein 4 (Sorghum bicolor (Sorghum)).